The chain runs to 327 residues: Phenylalanine--tRNA ligase alpha subunit (327 aa).

Glutamate 252 is a binding site for Mg(2+).

The protein belongs to the class-II aminoacyl-tRNA synthetase family. Phe-tRNA synthetase alpha subunit type 1 subfamily. Tetramer of two alpha and two beta subunits. Requires Mg(2+) as cofactor.

Its subcellular location is the cytoplasm. It catalyses the reaction tRNA(Phe) + L-phenylalanine + ATP = L-phenylalanyl-tRNA(Phe) + AMP + diphosphate + H(+). The sequence is that of Phenylalanine--tRNA ligase alpha subunit from Shigella flexneri.